Here is a 260-residue protein sequence, read N- to C-terminus: tRNA (guanine-N(1)-)-methyltransferase (260 aa).

Residues G117 and 137–142 (LGDFVL) each bind S-adenosyl-L-methionine.

Belongs to the RNA methyltransferase TrmD family. Homodimer.

Its subcellular location is the cytoplasm. It catalyses the reaction guanosine(37) in tRNA + S-adenosyl-L-methionine = N(1)-methylguanosine(37) in tRNA + S-adenosyl-L-homocysteine + H(+). Functionally, specifically methylates guanosine-37 in various tRNAs. This is tRNA (guanine-N(1)-)-methyltransferase from Cupriavidus taiwanensis (strain DSM 17343 / BCRC 17206 / CCUG 44338 / CIP 107171 / LMG 19424 / R1) (Ralstonia taiwanensis (strain LMG 19424)).